An 843-amino-acid chain; its full sequence is MAKPLTDGERRKQISVRGLAGLGDVAEVRKSFNRHLHFTLVKDRNVATRRDYYLALAHTVRDHLVGRWIRTQQRYYERDPKRIYYLSLEFYMGRTLQNTMVNLGLQNACDEAIYQLGLDLEELEEIEEDAGLGNGGLGRLAACFLDSMATLGLAAYGYGIRYEFGIFNQKIVNGWQVEEADDWLRYGNPWEKARPEYMLPVHFYGRVEHSPEGVRWLDTQVVLAMPYDTPVPGYKNDTVNTMRLWSAKAPNDFKLHDFNVGGYIEAVLDRNLAENISRVLYPNDNFFEGKELRLKQEYFVVAATLQDIIRRFKSSKFGCRDPVRTSFETFPDKVAIQLNDTHPALAIPELMRILVDVEKVDWDKAWEITKKTCAYTNHTVLPEALERWPVSMFEKLLPRHLDIIYAINQRHLDHVAALFPGDVDRLRRMSVIEEGDCKRINMAHLCVIGSHAVNGVARIHSEIVRQSVFKDFYELEPEKFQNKTNGITPRRWLLLCNPGLAETIVERIGEGFLTDLSQLKKLLPLVGDEALIRDVAQVKQENKVKFSAFLEKQYGVKVNPSSMFDVHVKRIHEYKRQLLNCLHVVTLYNRIKKDPTQAFVPRTVMIGGKAAPGYHMAKKIIKLVTSIGNIVNHDPIVGDRLKVIFLENYRVSLAEKVIPAADLSQQISTAGTEASGTGNMKFMLNGALTIGTMDGANVEMAEEAGAENLFIFGLRVEDVEALDRKGYNAHEYYDRLPELRQAVDQINGGFFSPREPDCFKDVVNMLLNHDRFKVFADYEAYVACQARVDQLYRNPKEWTKKVIRNIACSGKFSSDRTITEYAHDIWGAEPPALQTPPPSLPRD.

Ala2 is modified (N-acetylalanine). Position 15 is a phosphoserine; by PHK; in form phosphorylase A (Ser15). Residues Asp43, Tyr197, and Arg310 each coordinate AMP. Tyr197 is subject to Phosphotyrosine. Phosphotyrosine is present on Tyr473. Lys569 is a binding site for pyridoxal 5'-phosphate. The interval 677 to 678 (TG) is pyridoxal 5'-phosphate. The residue at position 681 (Lys681) is an N6-(pyridoxal phosphate)lysine.

Belongs to the glycogen phosphorylase family. Homodimer. Dimers associate into a tetramer to form the enzymatically active phosphorylase A. Pyridoxal 5'-phosphate serves as cofactor. In terms of processing, phosphorylation of Ser-15 converts phosphorylase B (unphosphorylated) to phosphorylase A.

It catalyses the reaction [(1-&gt;4)-alpha-D-glucosyl](n) + phosphate = [(1-&gt;4)-alpha-D-glucosyl](n-1) + alpha-D-glucose 1-phosphate. Activity of phosphorylase is controlled both by allosteric means (through the non-covalent binding of metabolites) and by covalent modification. Thus AMP allosterically activates, whereas ATP, ADP, and glucose-6-phosphate allosterically inhibit, phosphorylase B. Functionally, glycogen phosphorylase that regulates glycogen mobilization. Phosphorylase is an important allosteric enzyme in carbohydrate metabolism. Enzymes from different sources differ in their regulatory mechanisms and in their natural substrates. However, all known phosphorylases share catalytic and structural properties. The protein is Glycogen phosphorylase, brain form (PYGB) of Bos taurus (Bovine).